A 532-amino-acid chain; its full sequence is Glucose-6-phosphate isomerase (532 aa).

The active-site Proton donor is the glutamate 322. Residues histidine 351 and lysine 457 contribute to the active site.

Belongs to the GPI family.

The protein resides in the cytoplasm. It carries out the reaction alpha-D-glucose 6-phosphate = beta-D-fructose 6-phosphate. Its pathway is carbohydrate biosynthesis; gluconeogenesis. It participates in carbohydrate degradation; glycolysis; D-glyceraldehyde 3-phosphate and glycerone phosphate from D-glucose: step 2/4. In terms of biological role, catalyzes the reversible isomerization of glucose-6-phosphate to fructose-6-phosphate. The protein is Glucose-6-phosphate isomerase of Synechococcus sp. (strain JA-3-3Ab) (Cyanobacteria bacterium Yellowstone A-Prime).